Consider the following 263-residue polypeptide: L-histidine 2-aminobutanoyltransferase (263 aa).

It belongs to the methyltransferase superfamily. CntL family. As to quaternary structure, interacts with CntM.

It catalyses the reaction L-histidine + S-adenosyl-L-methionine = (2S)-2-amino-4-{[(1S)-1-carboxy-2-(1H-imidazol-4-yl)ethyl]amino}butanoate + S-methyl-5'-thioadenosine + H(+). Its function is as follows. Catalyzes the nucleophilic attack of one alpha-aminobutanoate moiety from SAM onto L-histidine to produce the intermediate (2S)-2-amino-4-{[(1S)-1-carboxy-2-(1H-imidazol-4-yl)ethyl]amino}butanoate. Functions in the biosynthesis of the metallophore pseudopaline, which is involved in the acquisition of nickel and zinc, and thus enables bacterial growth inside the host, where metal access is limited. Therefore, this enzyme probably contributes to Pseudomonas virulence. Cannot use D-histidine in place of L-histidine as substrate. The protein is L-histidine 2-aminobutanoyltransferase of Pseudomonas aeruginosa (strain UCBPP-PA14).